Reading from the N-terminus, the 279-residue chain is Lactose operon transcription activator (279 aa).

Positions 174-272 (QHAVDFINTN…EISASEYRHH (99 aa)) constitute an HTH araC/xylS-type domain. 2 DNA-binding regions (H-T-H motif) span residues 191–212 (EDVA…KKNL) and 239–262 (ISDI…TKHF).

In terms of biological role, transcriptional regulator of the lacPH genes for lactose utilization. In Staphylococcus xylosus, this protein is Lactose operon transcription activator (lacR).